Consider the following 43-residue polypeptide: Truncated K3L homolog (43 aa).

This sequence belongs to the orthopoxvirus OPG041 family.

This chain is Truncated K3L homolog (OPG041), found in Cynomys gunnisoni (Gunnison's prairie dog).